Reading from the N-terminus, the 782-residue chain is LPS-assembly protein LptD (782 aa).

An N-terminal signal peptide occupies residues 1 to 24 (MKKNSYTRLSIAILSTLYSVSSLA).

It belongs to the LptD family. As to quaternary structure, component of the lipopolysaccharide transport and assembly complex. Interacts with LptE and LptA.

The protein resides in the cell outer membrane. Functionally, together with LptE, is involved in the assembly of lipopolysaccharide (LPS) at the surface of the outer membrane. The protein is LPS-assembly protein LptD of Pasteurella multocida (strain Pm70).